Reading from the N-terminus, the 709-residue chain is DNA ligase (709 aa).

A disordered region spans residues 1–20 (MTATHRGAQADASAPAGPLP). NAD(+)-binding positions include 52-56 (DAEYD), 101-102 (SL), and E146. K148 acts as the N6-AMP-lysine intermediate in catalysis. NAD(+) contacts are provided by R169, E205, K322, and K346. 4 residues coordinate Zn(2+): C440, C443, C458, and C464. In terms of domain architecture, BRCT spans 623-709 (KAPAPLSGKT…AEAGAAPAQE (87 aa)).

The protein belongs to the NAD-dependent DNA ligase family. LigA subfamily. Requires Mg(2+) as cofactor. Mn(2+) is required as a cofactor.

It carries out the reaction NAD(+) + (deoxyribonucleotide)n-3'-hydroxyl + 5'-phospho-(deoxyribonucleotide)m = (deoxyribonucleotide)n+m + AMP + beta-nicotinamide D-nucleotide.. In terms of biological role, DNA ligase that catalyzes the formation of phosphodiester linkages between 5'-phosphoryl and 3'-hydroxyl groups in double-stranded DNA using NAD as a coenzyme and as the energy source for the reaction. It is essential for DNA replication and repair of damaged DNA. The protein is DNA ligase of Cupriavidus necator (strain ATCC 17699 / DSM 428 / KCTC 22496 / NCIMB 10442 / H16 / Stanier 337) (Ralstonia eutropha).